We begin with the raw amino-acid sequence, 213 residues long: MKKTLLGSLILLAFAGNVQADINTETSGKVTFFGKVVENTCKVKTEHKNLSVVLNDVGKNSLSTKVNTAMPTPFTITLQNCDPTTANGTANKANKVGLYFYSWKNVDKENNFTLKNEQTTADYATNVNIQLMESNGTKAISVVGKETEDFMHTNNNGVALNQTHPNNAHISGSTQLTTGTNELPLHFIAQYYATNKATAGKVQSSVDFQIAYE.

The N-terminal stretch at 1 to 20 (MKKTLLGSLILLAFAGNVQA) is a signal peptide. An intrachain disulfide couples C41 to C81.

This sequence belongs to the fimbrial protein family.

It localises to the fimbrium. Its function is as follows. Mediates adherence to oropharyngeal epithelial cells. Helps the airway colonization process. In Haemophilus influenzae, this protein is Major fimbrial subunit (hifA).